A 1340-amino-acid chain; its full sequence is Lysine-specific demethylase ELF6 (1340 aa).

Residues Ala-16–Lys-57 enclose the JmjN domain. The segment at Gln-195–Asn-245 is disordered. Over residues Asn-217 to Lys-227 the composition is skewed to basic and acidic residues. Residues Asn-262–Ala-428 enclose the JmjC domain. Positions 305, 307, and 396 each coordinate Fe cation. The Nuclear localization signal 1 motif lies at Gly-818–Ile-825. The disordered stretch occupies residues Gly-1092–Thr-1225. Residues Asp-1099–Gln-1115 are compositionally biased toward polar residues. The span at Glu-1124–Thr-1133 shows a compositional bias: low complexity. Basic and acidic residues predominate over residues Ser-1188–Pro-1201. Positions Gly-1215 to Thr-1225 are enriched in polar residues. C2H2-type zinc fingers lie at residues Asn-1228–Arg-1250, Asn-1251–His-1275, Phe-1281–His-1305, and Tyr-1311–His-1337. Zn(2+)-binding residues include Cys-1230, Cys-1235, His-1248, Cys-1253, Cys-1258, His-1265, His-1271, His-1275, Cys-1283, Cys-1288, His-1301, His-1305, Cys-1313, Cys-1318, His-1331, and His-1337. A Nuclear localization signal 2 motif is present at residues His-1248–His-1255. The DNA-binding stretch occupies residues Lys-1260–Arg-1333.

The protein belongs to the JHDM3 histone demethylase family. As to quaternary structure, interacts with BZR2 (via N-terminus). As to expression, expressed at low levels in seedlings, cotyledons and leaves. Detected in inflorescences, stems, roots and siliques but not in shoot apical meristems or root tips. Accumulates in flowers and embryos.

Its subcellular location is the nucleus. The catalysed reaction is N(6),N(6),N(6)-trimethyl-L-lysyl(27)-[histone H3] + 2-oxoglutarate + O2 = N(6),N(6)-dimethyl-L-lysyl(27)-[histone H3] + formaldehyde + succinate + CO2. It carries out the reaction N(6),N(6)-dimethyl-L-lysyl(27)-[histone H3] + 2-oxoglutarate + O2 = N(6)-methyl-L-lysyl(27)-[histone H3] + formaldehyde + succinate + CO2. Functionally, histone demethylase that demethylates 'Lys-27' (H3K27me) of histone H3, thus acting as a positive regulator of gene expression. Demethylates tri-methylated (H3K27me3) and di-methylated (H3K27me2) H3K27me. Inactive on H3K27me1, H3K4me3, H3K9me2 and H3K36me3. Acts as a repressor of the photoperiodic flowering pathway and of FT. May also be active on H3K4me. Binds around the transcription start site of the FT locus. Required for epigenetic reprogramming by resetting the expression of the floral repressor FLC locus, thus aluviating cold-mediated FLC epigenetically silencing occurring during vernalization and preventing inapropriate epigenetic states inheritence. Together with REF6, required for H3K27me3 resetting (especially in constitutive heterochromatin within the pericentromeric regions) and transgenerational inheritance of histone marks, thus acting in safeguarding genome and epigenome integrity during sexual reproduction. This is Lysine-specific demethylase ELF6 from Arabidopsis thaliana (Mouse-ear cress).